Consider the following 105-residue polypeptide: Cuticle protein AMP1B (105 aa).

Positions 1-21 are disordered; that stretch reads DRDAQTLTDERSDQGDGNFRY. Residues 16-81 enclose the Chitin-binding type R&amp;R domain; sequence DGNFRYEFET…PSSDLLPVPP (66 aa).

As to expression, arthrodial membrane.

This Homarus americanus (American lobster) protein is Cuticle protein AMP1B.